Here is a 272-residue protein sequence, read N- to C-terminus: NAD kinase (272 aa).

Residue D50 is the Proton acceptor of the active site. Residues 50–51, 126–127, R152, D154, 165–170, and A189 each bind NAD(+); these read DG, NE, and TAYNKS.

The protein belongs to the NAD kinase family. It depends on a divalent metal cation as a cofactor.

It is found in the cytoplasm. It carries out the reaction NAD(+) + ATP = ADP + NADP(+) + H(+). In terms of biological role, involved in the regulation of the intracellular balance of NAD and NADP, and is a key enzyme in the biosynthesis of NADP. Catalyzes specifically the phosphorylation on 2'-hydroxyl of the adenosine moiety of NAD to yield NADP. This is NAD kinase from Streptococcus pneumoniae serotype 19F (strain G54).